A 209-amino-acid polypeptide reads, in one-letter code: Large ribosomal subunit protein uL3 (209 aa).

The interval 122 to 152 (AIKRHGQSRGPMSHGSRYHRRPGSMGPVDPN) is disordered.

It belongs to the universal ribosomal protein uL3 family. As to quaternary structure, part of the 50S ribosomal subunit. Forms a cluster with proteins L14 and L19. Interacts with RNA helicase CshA.

One of the primary rRNA binding proteins, it binds directly near the 3'-end of the 23S rRNA, where it nucleates assembly of the 50S subunit. Strongly stimulates 23S rRNA precursor processing by mini-ribonuclease 3 (MrnC); 20-30% DMSO can replace L3, suggesting the protein may alter rRNA conformation. The protein is Large ribosomal subunit protein uL3 of Bacillus subtilis (strain 168).